The primary structure comprises 380 residues: Cytochrome b (380 aa).

The next 4 helical transmembrane spans lie at 34–54, 78–99, 114–134, and 179–199; these read FGSLLALCLATQILTGLLLAM, WLIRNMHANGASFFFICVYLHI, WNTGVLLLLTLMATAFVGYVL, and FFALHFLLPFLIAGLTLIHLT. 2 residues coordinate heme b: histidine 84 and histidine 98. Positions 183 and 197 each coordinate heme b. Histidine 202 is a binding site for a ubiquinone. 4 consecutive transmembrane segments (helical) span residues 227–247, 289–309, 321–341, and 348–368; these read LKDILGLMLLLLPLTTLALFS, LGGVLALAASVLVLFLSPLLH, LSQLLFWTLVANLLILTWIGS, and FIIIGQLASTTYFTILLVLFP.

This sequence belongs to the cytochrome b family. The cytochrome bc1 complex contains 11 subunits: 3 respiratory subunits (MT-CYB, CYC1 and UQCRFS1), 2 core proteins (UQCRC1 and UQCRC2) and 6 low-molecular weight proteins (UQCRH/QCR6, UQCRB/QCR7, UQCRQ/QCR8, UQCR10/QCR9, UQCR11/QCR10 and a cleavage product of UQCRFS1). This cytochrome bc1 complex then forms a dimer. The cofactor is heme b.

Its subcellular location is the mitochondrion inner membrane. In terms of biological role, component of the ubiquinol-cytochrome c reductase complex (complex III or cytochrome b-c1 complex) that is part of the mitochondrial respiratory chain. The b-c1 complex mediates electron transfer from ubiquinol to cytochrome c. Contributes to the generation of a proton gradient across the mitochondrial membrane that is then used for ATP synthesis. This is Cytochrome b (MT-CYB) from Oceanodroma melania (Black storm-petrel).